A 447-amino-acid polypeptide reads, in one-letter code: Ribosomal protein uS12 methylthiotransferase RimO (447 aa).

The 111-residue stretch at 10–120 (PKVGFVSLGC…VVNAVHDVVP (111 aa)) folds into the MTTase N-terminal domain. Cys19, Cys55, Cys84, Cys153, Cys157, and Cys160 together coordinate [4Fe-4S] cluster. Residues 139–377 (LTPRHYAYLK…MAHQQAISAA (239 aa)) enclose the Radical SAM core domain. A TRAM domain is found at 380–447 (QMKIGKEIEV…DEYDLWAEML (68 aa)).

This sequence belongs to the methylthiotransferase family. RimO subfamily. Requires [4Fe-4S] cluster as cofactor.

Its subcellular location is the cytoplasm. It carries out the reaction L-aspartate(89)-[ribosomal protein uS12]-hydrogen + (sulfur carrier)-SH + AH2 + 2 S-adenosyl-L-methionine = 3-methylsulfanyl-L-aspartate(89)-[ribosomal protein uS12]-hydrogen + (sulfur carrier)-H + 5'-deoxyadenosine + L-methionine + A + S-adenosyl-L-homocysteine + 2 H(+). Catalyzes the methylthiolation of an aspartic acid residue of ribosomal protein uS12. The polypeptide is Ribosomal protein uS12 methylthiotransferase RimO (Pseudomonas savastanoi pv. phaseolicola (strain 1448A / Race 6) (Pseudomonas syringae pv. phaseolicola (strain 1448A / Race 6))).